The chain runs to 340 residues: Zinc finger protein 367 (340 aa).

The segment at 96-140 is disordered; sequence LPTLRGAPPSSASVAAVSGGEDEEEASSPDSGHLKDGIRRGRPRA. Residues 101–114 are compositionally biased toward low complexity; that stretch reads GAPPSSASVAAVSG. The span at 127-140 shows a compositional bias: basic and acidic residues; the sequence is GHLKDGIRRGRPRA. 2 C2H2-type zinc fingers span residues 157–179 and 185–209; these read IRCNICNRVFPREKSLQAHKRTH and YLCDYPDCGKAFVQSGQLKTHQRLH. The tract at residues 280–317 is disordered; sequence KGKLVQKADQEQQDPLEYLQSDEEDDEKSGAQRRLQEQ. Residues 299-332 are a coiled coil; sequence QSDEEDDEKSGAQRRLQEQRERLHGALALIELAN. Position 300 is a phosphoserine (Ser300). Residues 307-317 show a composition bias toward basic and acidic residues; the sequence is KSGAQRRLQEQ.

The protein belongs to the krueppel C2H2-type zinc-finger protein family.

The protein localises to the nucleus. Transcriptional activator. May be involved in transcriptional activation of erythroid genes. The sequence is that of Zinc finger protein 367 (Znf367) from Rattus norvegicus (Rat).